A 378-amino-acid chain; its full sequence is Myoglobin (378 aa).

Ala2 is modified (blocked amino end (Ala)). A heme-binding site is contributed by His332.

Belongs to the indoleamine 2,3-dioxygenase family. As to quaternary structure, homodimer. Heme serves as cofactor.

In terms of biological role, serves a reserve supply of oxygen and facilitates the movement of oxygen within muscles. This chain is Myoglobin, found in Haliotis diversicolor (Abalone).